A 361-amino-acid chain; its full sequence is FK506-binding protein 39 kDa (361 aa).

The disordered stretch occupies residues 122-256 (LVDEEDEEEE…PSSPKTRTLK (135 aa)). Positions 123–174 (VDEEDEEEEESDEDYDLSPTEEDLVETVSGDEESEEESESEDNSASEEDELD) are enriched in acidic residues. Residue S192 is modified to Phosphoserine. A compositionally biased stretch (basic and acidic residues) spans 208-227 (QKVEGTPVKEKKVAFAEKLE). T213 is subject to Phosphothreonine. Positions 241 to 252 (QASSNAPSSPKT) are enriched in polar residues. S249 carries the phosphoserine modification. The region spanning 275–361 (GKKVEMRYIG…VFEVKLVRVH (87 aa)) is the PPIase FKBP-type domain.

It belongs to the FKBP-type PPIase family. FKBP3/4 subfamily.

It is found in the nucleus. It localises to the nucleolus. It catalyses the reaction [protein]-peptidylproline (omega=180) = [protein]-peptidylproline (omega=0). PPIase that acts as a histone chaperone. Histone proline isomerase that increases the rate of cis-trans isomerization at prolines on the histone H3 N-terminal tail. Proline isomerization influences H3 methylation thereby regulating gene expression. The protein is FK506-binding protein 39 kDa of Schizosaccharomyces pombe (strain 972 / ATCC 24843) (Fission yeast).